A 263-amino-acid polypeptide reads, in one-letter code: Protein phosphatase type 2A regulatory subunit RTS3 (263 aa).

2 disordered regions span residues 1–62 (MIAT…AQRR) and 149–176 (LPLT…ISNG). Over residues 46-61 (LSTSSSPSSSPMSAQR) the composition is skewed to low complexity. Phosphoserine occurs at positions 172, 192, 214, and 238.

It is found in the cytoplasm. Its subcellular location is the nucleus. Functionally, may be a component of a protein phosphatase type 2A (PP2A) complex. Negatively regulates SIT4 phosphatase, a modulators of caffeine sensitivity. In Saccharomyces cerevisiae (strain ATCC 204508 / S288c) (Baker's yeast), this protein is Protein phosphatase type 2A regulatory subunit RTS3 (RTS3).